The following is a 459-amino-acid chain: Phosphoglucosamine mutase (459 aa).

Ser106 (phosphoserine intermediate) is an active-site residue. Mg(2+)-binding residues include Ser106, Asp247, Asp249, and Asp251. Ser106 is modified (phosphoserine).

Belongs to the phosphohexose mutase family. It depends on Mg(2+) as a cofactor. In terms of processing, activated by phosphorylation.

It catalyses the reaction alpha-D-glucosamine 1-phosphate = D-glucosamine 6-phosphate. Catalyzes the conversion of glucosamine-6-phosphate to glucosamine-1-phosphate. The chain is Phosphoglucosamine mutase from Chlamydia muridarum (strain MoPn / Nigg).